The following is a 347-amino-acid chain: NADH-ubiquinone oxidoreductase chain 2 (347 aa).

Helical transmembrane passes span 3–23 (PMIF…VMMS), 25–45 (HWFM…PVLM), 59–79 (YFLT…INLM), 96–116 (MLIT…FWVP), 122–142 (IPLS…LSLL), 149–169 (INME…GWGG), 201–221 (SFLN…LLIF), 239–259 (IIAT…PLTG), 274–294 (NSTI…FFYI), and 326–346 (ILPL…FLML).

This sequence belongs to the complex I subunit 2 family. As to quaternary structure, core subunit of respiratory chain NADH dehydrogenase (Complex I) which is composed of 45 different subunits. Interacts with TMEM242.

Its subcellular location is the mitochondrion inner membrane. The catalysed reaction is a ubiquinone + NADH + 5 H(+)(in) = a ubiquinol + NAD(+) + 4 H(+)(out). Its function is as follows. Core subunit of the mitochondrial membrane respiratory chain NADH dehydrogenase (Complex I) that is believed to belong to the minimal assembly required for catalysis. Complex I functions in the transfer of electrons from NADH to the respiratory chain. The immediate electron acceptor for the enzyme is believed to be ubiquinone. This chain is NADH-ubiquinone oxidoreductase chain 2, found in Crocidura hildegardeae (Hildegarde's shrew).